Reading from the N-terminus, the 445-residue chain is MTSLSTDFTEKLFADYEANAKYGAIENAVTHNGLLKSIETRQSEVENDFVFSIDLTKDEVSNQKASGRCWMFAALNTFRHKLISDFKLESFELSQAHTFFWDKYEKSNWFLEQIIATADQEIGSRKVKFLLDTPQQDGGQWDMVVSLFEKYGVVPKSVYPESVASSNSRELNQYLNKLLRQDAQILRDLIASGADQAAVQAKKEEFLQEIFNYLAMTLGLPPRQFDFAYRDKDDNYRSEKGITPRAFFEKYVGLKLSDYVSVINAPTADKPYGKSYTVEMLGNVVGAPSVRYINLPMDRFKELAIAQMKAGESVWFGSDVGQVSDRQKGILATNVYDFTASMDINWTQDKAGRLDYSESLMTHAMVLTGVDLDADGKPIKWKIENSWGDKVGQKGYFVASDAWMDEYTYQIVVRKDFLTAEELAAYEADPQVLAPWDPMGSLASK.

Catalysis depends on residues C69, H363, and N385.

This sequence belongs to the peptidase C1 family. As to quaternary structure, homohexamer.

The catalysed reaction is Inactivates bleomycin B2 (a cytotoxic glycometallopeptide) by hydrolysis of a carboxyamide bond of beta-aminoalanine, but also shows general aminopeptidase activity. The specificity varies somewhat with source, but amino acid arylamides of Met, Leu and Ala are preferred.. This Streptococcus thermophilus protein is Aminopeptidase C (pepC).